A 387-amino-acid chain; its full sequence is Succinate--CoA ligase [ADP-forming] subunit beta (387 aa).

Positions 9–244 (KAIFADNGIP…ITEENPAERE (236 aa)) constitute an ATP-grasp domain. Residues K46, 53–55 (GRG), E99, A102, and E107 contribute to the ATP site. Mg(2+) is bound by residues N199 and D213. Residues N264 and 321-323 (GIV) contribute to the substrate site.

The protein belongs to the succinate/malate CoA ligase beta subunit family. As to quaternary structure, heterotetramer of two alpha and two beta subunits. It depends on Mg(2+) as a cofactor.

The catalysed reaction is succinate + ATP + CoA = succinyl-CoA + ADP + phosphate. It carries out the reaction GTP + succinate + CoA = succinyl-CoA + GDP + phosphate. It participates in carbohydrate metabolism; tricarboxylic acid cycle; succinate from succinyl-CoA (ligase route): step 1/1. Its function is as follows. Succinyl-CoA synthetase functions in the citric acid cycle (TCA), coupling the hydrolysis of succinyl-CoA to the synthesis of either ATP or GTP and thus represents the only step of substrate-level phosphorylation in the TCA. The beta subunit provides nucleotide specificity of the enzyme and binds the substrate succinate, while the binding sites for coenzyme A and phosphate are found in the alpha subunit. The polypeptide is Succinate--CoA ligase [ADP-forming] subunit beta (Campylobacter jejuni subsp. jejuni serotype O:6 (strain 81116 / NCTC 11828)).